Here is a 274-residue protein sequence, read N- to C-terminus: NAD-dependent protein deacetylase (274 aa).

The Deacetylase sirtuin-type domain occupies 1 to 274 (MDSRMSDLQA…CDEVLAEVVP (274 aa)). NAD(+)-binding positions include 26–46 (GAGCSTASGIPDYRDGQGQWK) and 104–107 (QNVD). His-122 serves as the catalytic Proton acceptor. Zn(2+) contacts are provided by Cys-130, Cys-133, Cys-181, and Cys-184. NAD(+)-binding positions include 221-223 (GSS), 247-249 (NLG), and Cys-265.

Belongs to the sirtuin family. Class II subfamily. Zn(2+) serves as cofactor.

Its subcellular location is the cytoplasm. It catalyses the reaction N(6)-acetyl-L-lysyl-[protein] + NAD(+) + H2O = 2''-O-acetyl-ADP-D-ribose + nicotinamide + L-lysyl-[protein]. NAD-dependent protein deacetylase which modulates the activities of several enzymes which are inactive in their acetylated form. The protein is NAD-dependent protein deacetylase of Bordetella pertussis (strain Tohama I / ATCC BAA-589 / NCTC 13251).